A 641-amino-acid polypeptide reads, in one-letter code: DNA primase (641 aa).

Residues 41 to 65 (CPFHDEKSPSFQVSPSKGFFHCFGC) form a CHC2-type zinc finger. The Toprim domain occupies 262 to 346 (SRAVVVEGYT…AAETYIAIAP (85 aa)). E268, D317, and D319 together coordinate Mg(2+). The segment at 444–478 (RDRGGKGPAPDQRQRGGGPQQQAGPMTATPRGPAL) is disordered.

This sequence belongs to the DnaG primase family. Monomer. Interacts with DnaB. Zn(2+) is required as a cofactor. It depends on Mg(2+) as a cofactor.

It catalyses the reaction ssDNA + n NTP = ssDNA/pppN(pN)n-1 hybrid + (n-1) diphosphate.. In terms of biological role, RNA polymerase that catalyzes the synthesis of short RNA molecules used as primers for DNA polymerase during DNA replication. This is DNA primase from Streptomyces coelicolor (strain ATCC BAA-471 / A3(2) / M145).